A 102-amino-acid chain; its full sequence is Small ribosomal subunit protein bS18c (102 aa).

Belongs to the bacterial ribosomal protein bS18 family. Part of the 30S ribosomal subunit.

It is found in the plastid. The protein localises to the chloroplast. The polypeptide is Small ribosomal subunit protein bS18c (Phaseolus vulgaris (Kidney bean)).